Reading from the N-terminus, the 476-residue chain is Nuclear envelope morphology protein 1 (476 aa).

The disordered stretch occupies residues 47–74; the sequence is RRRSSYSASSLSSLSSKPTEKEVPTRNE. Low complexity predominate over residues 51-62; it reads SYSASSLSSLSS. Basic and acidic residues predominate over residues 64-74; sequence PTEKEVPTRNE. The chain crosses the membrane as a helical span at residues 123 to 139; it reads FFWGLCRFVFFPVLLSY. Disordered stretches follow at residues 164 to 190 and 232 to 256; these read SSHQ…SNGN and GKAN…PAND. Positions 234 to 256 are enriched in polar residues; it reads ANSNRSGHSHQPQSTQFSPPAND. 4 N-linked (GlcNAc...) asparagine glycosylation sites follow: Asn-237, Asn-257, Asn-284, and Asn-356. The region spanning 299–460 is the FCP1 homology domain; sequence SKLPRKTLVL…LNLLSFLHAL (162 aa).

This sequence belongs to the Dullard family. As to quaternary structure, component of the nem1-spo7 complex.

The protein localises to the endoplasmic reticulum membrane. The protein resides in the nucleus membrane. The catalysed reaction is O-phospho-L-seryl-[protein] + H2O = L-seryl-[protein] + phosphate. It carries out the reaction O-phospho-L-threonyl-[protein] + H2O = L-threonyl-[protein] + phosphate. Catalytic component of the nem1-spo7 complex which acts as a phosphatase and may be required for proper nuclear membrane morphology. This Schizosaccharomyces pombe (strain 972 / ATCC 24843) (Fission yeast) protein is Nuclear envelope morphology protein 1 (nem1).